Reading from the N-terminus, the 208-residue chain is Large ribosomal subunit protein bL25 (208 aa).

It belongs to the bacterial ribosomal protein bL25 family. CTC subfamily. In terms of assembly, part of the 50S ribosomal subunit; part of the 5S rRNA/L5/L18/L25 subcomplex. Contacts the 5S rRNA. Binds to the 5S rRNA independently of L5 and L18.

In terms of biological role, this is one of the proteins that binds to the 5S RNA in the ribosome where it forms part of the central protuberance. This Syntrophotalea carbinolica (strain DSM 2380 / NBRC 103641 / GraBd1) (Pelobacter carbinolicus) protein is Large ribosomal subunit protein bL25.